We begin with the raw amino-acid sequence, 368 residues long: Metacaspase-6 (368 aa).

Catalysis depends on residues His86 and Cys139. The residue at position 139 (Cys139) is an S-nitrosocysteine. A disordered region spans residues 153–174 (GESTKKKKDSGDSSTINKETEA).

Belongs to the peptidase C14B family. Post-translationally, proteolytically processed; by an autocatalytic mechanism. In terms of tissue distribution, expressed in roots and flower buds.

The protein is Metacaspase-6 (AMC6) of Arabidopsis thaliana (Mouse-ear cress).